We begin with the raw amino-acid sequence, 681 residues long: Pseudohemocyanin-2 (681 aa).

The signal sequence occupies residues 1–21 (VLLCSLVAATAAWPYFGGFQR). Asn98, Asn191, Asn228, and Asn624 each carry an N-linked (GlcNAc...) asparagine glycan.

Belongs to the tyrosinase family. Hemocyanin subfamily. Hexamer. As to expression, strongly expressed in ovaries. Also expressed in heart. Not detected in hepatopancreas, gills, connective tissue or muscle.

In terms of biological role, does not function as a hemocyanin. The sequence is that of Pseudohemocyanin-2 from Homarus americanus (American lobster).